A 182-amino-acid chain; its full sequence is Ribosome-recycling factor (182 aa).

It belongs to the RRF family.

It localises to the cytoplasm. Functionally, responsible for the release of ribosomes from messenger RNA at the termination of protein biosynthesis. May increase the efficiency of translation by recycling ribosomes from one round of translation to another. In Gloeobacter violaceus (strain ATCC 29082 / PCC 7421), this protein is Ribosome-recycling factor.